The chain runs to 208 residues: NAD(P)H dehydrogenase (quinone) (208 aa).

One can recognise a Flavodoxin-like domain in the interval 4 to 199 (VNVIFHSIHG…AMARYQGRHV (196 aa)). FMN-binding positions include 10–15 (SIHGHT) and 87–89 (TRY). Substrate is bound at residue Trp107. FMN contacts are provided by residues 122–128 (SSGTQHG) and His143.

This sequence belongs to the WrbA family. The cofactor is FMN.

It catalyses the reaction a quinone + NADH + H(+) = a quinol + NAD(+). It carries out the reaction a quinone + NADPH + H(+) = a quinol + NADP(+). This is NAD(P)H dehydrogenase (quinone) from Methanosarcina barkeri (strain Fusaro / DSM 804).